Reading from the N-terminus, the 239-residue chain is Pyridoxine 5'-phosphate synthase (239 aa).

Asn-7 contacts 3-amino-2-oxopropyl phosphate. 9–10 (DH) is a binding site for 1-deoxy-D-xylulose 5-phosphate. A 3-amino-2-oxopropyl phosphate-binding site is contributed by Arg-18. The active-site Proton acceptor is His-43. Arg-45 and His-50 together coordinate 1-deoxy-D-xylulose 5-phosphate. Glu-70 functions as the Proton acceptor in the catalytic mechanism. Thr-100 serves as a coordination point for 1-deoxy-D-xylulose 5-phosphate. His-192 (proton donor) is an active-site residue. 3-amino-2-oxopropyl phosphate-binding positions include Gly-193 and 214 to 215 (GH).

It belongs to the PNP synthase family. As to quaternary structure, homooctamer; tetramer of dimers.

It localises to the cytoplasm. The enzyme catalyses 3-amino-2-oxopropyl phosphate + 1-deoxy-D-xylulose 5-phosphate = pyridoxine 5'-phosphate + phosphate + 2 H2O + H(+). Its pathway is cofactor biosynthesis; pyridoxine 5'-phosphate biosynthesis; pyridoxine 5'-phosphate from D-erythrose 4-phosphate: step 5/5. Its function is as follows. Catalyzes the complicated ring closure reaction between the two acyclic compounds 1-deoxy-D-xylulose-5-phosphate (DXP) and 3-amino-2-oxopropyl phosphate (1-amino-acetone-3-phosphate or AAP) to form pyridoxine 5'-phosphate (PNP) and inorganic phosphate. This Pelagibacter ubique (strain HTCC1062) protein is Pyridoxine 5'-phosphate synthase.